We begin with the raw amino-acid sequence, 357 residues long: Chorismate synthase (357 aa).

R48 is a binding site for NADP(+). Residues 125–127, 238–239, G282, 297–301, and R323 each bind FMN; these read RSS, NA, and KPTSS.

This sequence belongs to the chorismate synthase family. Homotetramer. Requires FMNH2 as cofactor.

It carries out the reaction 5-O-(1-carboxyvinyl)-3-phosphoshikimate = chorismate + phosphate. The protein operates within metabolic intermediate biosynthesis; chorismate biosynthesis; chorismate from D-erythrose 4-phosphate and phosphoenolpyruvate: step 7/7. Catalyzes the anti-1,4-elimination of the C-3 phosphate and the C-6 proR hydrogen from 5-enolpyruvylshikimate-3-phosphate (EPSP) to yield chorismate, which is the branch point compound that serves as the starting substrate for the three terminal pathways of aromatic amino acid biosynthesis. This reaction introduces a second double bond into the aromatic ring system. The protein is Chorismate synthase of Gluconacetobacter diazotrophicus (strain ATCC 49037 / DSM 5601 / CCUG 37298 / CIP 103539 / LMG 7603 / PAl5).